A 414-amino-acid chain; its full sequence is Clusterin-associated protein 1 (414 aa).

Positions 198-291 form a coiled coil; that stretch reads KTKDLLNNVA…ERFEEAKNTL (94 aa). Residues 305–414 are disordered; it reads LLKSGSNDDS…EPLDESDNDF (110 aa). Composition is skewed to acidic residues over residues 312-328 and 360-389; these read DDSD…DSEL and DSDD…EDES. Ser314, Ser324, and Ser326 each carry phosphoserine. Ser410 bears the Phosphoserine mark.

It belongs to the CLUAP1 family. In terms of assembly, interacts with CLU/clusterin. Interacts with UBXN10; the interaction is direct.

Its subcellular location is the cell projection. It is found in the cilium. The protein resides in the nucleus. Functionally, required for cilia biogenesis. Appears to function within the multiple intraflagellar transport complex B (IFT-B). Key regulator of hedgehog signaling. This chain is Clusterin-associated protein 1 (CLUAP1), found in Macaca fascicularis (Crab-eating macaque).